Reading from the N-terminus, the 180-residue chain is Protein GrpE (180 aa).

Positions 1 to 21 (MSEEVKEQNLPEVEPVQEAAS) are disordered.

Belongs to the GrpE family. Homodimer.

It localises to the cytoplasm. In terms of biological role, participates actively in the response to hyperosmotic and heat shock by preventing the aggregation of stress-denatured proteins, in association with DnaK and GrpE. It is the nucleotide exchange factor for DnaK and may function as a thermosensor. Unfolded proteins bind initially to DnaJ; upon interaction with the DnaJ-bound protein, DnaK hydrolyzes its bound ATP, resulting in the formation of a stable complex. GrpE releases ADP from DnaK; ATP binding to DnaK triggers the release of the substrate protein, thus completing the reaction cycle. Several rounds of ATP-dependent interactions between DnaJ, DnaK and GrpE are required for fully efficient folding. The protein is Protein GrpE of Campylobacter concisus (strain 13826).